Here is a 233-residue protein sequence, read N- to C-terminus: MAGGLPHPVLWSTLLNVDTITIGGATVEFKHVFYTWCAMAILFSLGLIVRSSLKVVPGALQNVFEVVIGGLEDFVVGNIGEDGRKVFPLLGGIFLFILFQNLLGLVPGCDAPTANVNTNAAMALFVFGYYNYQGLKRWGPGYIKHFMGPMTWLTPLMLPLEIISHCARPLSLTLRLFGNIRGEEIVMVLFFLMAPIVGTLPVYFLFLLGKVLQAFIFFMLTMVYLKGAFEHAH.

Transmembrane regions (helical) follow at residues 29-49 (FKHV…GLIV), 86-106 (VFPL…LGLV), 118-135 (TNAA…YQGL), 188-208 (VLFF…LFLL), and 209-229 (GKVL…KGAF).

Belongs to the ATPase A chain family. In terms of assembly, F-type ATPases have 2 components, CF(1) - the catalytic core - and CF(0) - the membrane proton channel. CF(1) has five subunits: alpha(3), beta(3), gamma(1), delta(1), epsilon(1). CF(0) has three main subunits: a(1), b(2) and c(9-12). The alpha and beta chains form an alternating ring which encloses part of the gamma chain. CF(1) is attached to CF(0) by a central stalk formed by the gamma and epsilon chains, while a peripheral stalk is formed by the delta and b chains.

It is found in the cell inner membrane. In terms of biological role, key component of the proton channel; it plays a direct role in the translocation of protons across the membrane. In Nitratidesulfovibrio vulgaris (strain ATCC 29579 / DSM 644 / CCUG 34227 / NCIMB 8303 / VKM B-1760 / Hildenborough) (Desulfovibrio vulgaris), this protein is ATP synthase subunit a.